A 340-amino-acid polypeptide reads, in one-letter code: Glucokinase (340 aa).

Residue 17-22 (GDIGGT) participates in ATP binding.

It belongs to the bacterial glucokinase family.

It localises to the cytoplasm. It catalyses the reaction D-glucose + ATP = D-glucose 6-phosphate + ADP + H(+). The sequence is that of Glucokinase from Agrobacterium fabrum (strain C58 / ATCC 33970) (Agrobacterium tumefaciens (strain C58)).